We begin with the raw amino-acid sequence, 351 residues long: Ion-translocating oxidoreductase complex subunit D (351 aa).

4 consecutive transmembrane segments (helical) span residues 18 to 38 (IMLL…YFFG), 40 to 60 (GSLI…GAVL), 87 to 107 (LPPL…IVIA), and 121 to 141 (PAMV…TSWL). Threonine 185 is modified (FMN phosphoryl threonine). 5 helical membrane passes run 211-231 (VLAG…GLLL), 241-261 (IPVS…MIAP), 264-284 (FASP…FFIA), 298-318 (LIFG…GGYP), and 321-341 (VAFA…YTQP).

This sequence belongs to the NqrB/RnfD family. The complex is composed of six subunits: RnfA, RnfB, RnfC, RnfD, RnfE and RnfG. FMN serves as cofactor.

The protein resides in the cell inner membrane. Functionally, part of a membrane-bound complex that couples electron transfer with translocation of ions across the membrane. The polypeptide is Ion-translocating oxidoreductase complex subunit D (Yersinia pestis).